Reading from the N-terminus, the 158-residue chain is uncharacterized protein (158 aa).

In terms of domain architecture, HTH asnC-type spans 12-73 (LDEIDRAILR…LINPFKAGYE (62 aa)). The H-T-H motif DNA-binding region spans 31–50 (YSEISRRINVPESTVRARVN).

This is an uncharacterized protein from Pyrococcus horikoshii (strain ATCC 700860 / DSM 12428 / JCM 9974 / NBRC 100139 / OT-3).